Consider the following 272-residue polypeptide: ATP synthase subunit delta (272 aa).

It belongs to the ATPase delta chain family. As to quaternary structure, F-type ATPases have 2 components, F(1) - the catalytic core - and F(0) - the membrane proton channel. F(1) has five subunits: alpha(3), beta(3), gamma(1), delta(1), epsilon(1). F(0) has three main subunits: a(1), b(2) and c(10-14). The alpha and beta chains form an alternating ring which encloses part of the gamma chain. F(1) is attached to F(0) by a central stalk formed by the gamma and epsilon chains, while a peripheral stalk is formed by the delta and b chains.

The protein localises to the cell membrane. F(1)F(0) ATP synthase produces ATP from ADP in the presence of a proton or sodium gradient. F-type ATPases consist of two structural domains, F(1) containing the extramembraneous catalytic core and F(0) containing the membrane proton channel, linked together by a central stalk and a peripheral stalk. During catalysis, ATP synthesis in the catalytic domain of F(1) is coupled via a rotary mechanism of the central stalk subunits to proton translocation. In terms of biological role, this protein is part of the stalk that links CF(0) to CF(1). It either transmits conformational changes from CF(0) to CF(1) or is implicated in proton conduction. The protein is ATP synthase subunit delta of Corynebacterium urealyticum (strain ATCC 43042 / DSM 7109).